The following is a 69-amino-acid chain: Guanine nucleotide-binding protein subunit gamma (69 aa).

S2 carries the post-translational modification N-acetylserine. At C66 the chain carries Cysteine methyl ester. Residue C66 is the site of S-geranylgeranyl cysteine attachment. The propeptide at 67–69 (SVL) is removed in mature form.

This sequence belongs to the G protein gamma family. G proteins are composed of 3 units, alpha, beta and gamma. Interacts with gpbA, and this requires phlp1. In terms of processing, this protein is thought to be subject to lipidation, and this requires phlp1.

It localises to the cell membrane. Guanine nucleotide-binding proteins (G proteins) are involved as a modulator or transducer in various transmembrane signaling systems. This major G-protein of the squid photoreceptor is involved in visual transduction. The beta and gamma chains are required for the GTPase activity, for replacement of GDP by GTP, and for G protein-effector interaction. Required for normal chemotaxis in response to cAMP. This Dictyostelium discoideum (Social amoeba) protein is Guanine nucleotide-binding protein subunit gamma (gpgA).